Consider the following 34-residue polypeptide: Photosystem II reaction center protein M (34 aa).

Residues 5–25 (ILAFIATALFILIPTAFSLIL) traverse the membrane as a helical segment.

The protein belongs to the PsbM family. As to quaternary structure, PSII is composed of 1 copy each of membrane proteins PsbA, PsbB, PsbC, PsbD, PsbE, PsbF, PsbH, PsbI, PsbJ, PsbK, PsbL, PsbM, PsbT, PsbX, PsbY, PsbZ, Psb30/Ycf12, at least 3 peripheral proteins of the oxygen-evolving complex and a large number of cofactors. It forms dimeric complexes.

It is found in the plastid. It localises to the chloroplast thylakoid membrane. Its function is as follows. One of the components of the core complex of photosystem II (PSII). PSII is a light-driven water:plastoquinone oxidoreductase that uses light energy to abstract electrons from H(2)O, generating O(2) and a proton gradient subsequently used for ATP formation. It consists of a core antenna complex that captures photons, and an electron transfer chain that converts photonic excitation into a charge separation. This subunit is found at the monomer-monomer interface. This Huperzia lucidula (Shining clubmoss) protein is Photosystem II reaction center protein M.